The chain runs to 444 residues: Gustatory receptor 5a for trehalose (444 aa).

Topologically, residues 1–56 are cytoplasmic; sequence MRQLKGRNRCNRAVRHLKIQGKMWLKNLKSGLEQIRESQVRGTRKNFLHDGSFHEA. Residues 57 to 77 traverse the membrane as a helical segment; that stretch reads VAPVLAVAQCFCLMPVCGISA. At 78 to 178 the chain is on the extracellular side; sequence PTYRGLSFNR…RARPARRLKL (101 aa). The chain crosses the membrane as a helical span at residues 179–199; the sequence is VAFVLLVVSLMEHLLSIISVV. Residues 200-214 are Cytoplasmic-facing; it reads YYDFCPRRSDPVESY. Residues 215-235 form a helical membrane-spanning segment; sequence LLGASAQLFEVFPYSNWLAWL. Residues 236–240 lie on the Extracellular side of the membrane; that stretch reads GKIQN. Residues 241–261 form a helical membrane-spanning segment; that stretch reads VLLTFGWSYMDIFLMMLGMGL. At 262–305 the chain is on the cytoplasmic side; sequence SEMLARLNRSLEQQVRQPMPEAYWTWSRTLYRSIVELIREVDDA. Residues 306-326 form a helical membrane-spanning segment; it reads VSGIMLISFGSNLYFICLQLL. Topologically, residues 327-338 are extracellular; sequence KSINTMPSSAHA. Residues 339–359 form a helical membrane-spanning segment; that stretch reads VYFYFSLLFLLSRSTAVLLFV. Topologically, residues 360 to 410 are cytoplasmic; that stretch reads SAINDQAREPLRLLRLVPLKGYHPEVFRFAAELASDQVALTGLKFFNVTRK. The helical transmembrane segment at 411-431 threads the bilayer; the sequence is LFLAMAGTVATYELVLIQFHE. Topologically, residues 432–444 are extracellular; that stretch reads DKKTWDCSPFNLD.

Belongs to the insect chemoreceptor superfamily. Gustatory receptor (GR) family. Gr5a subfamily. Expressed in labellar chemosensory neurons.

Its subcellular location is the cell membrane. Its function is as follows. Gustatory receptor required for response to the sugar trehalose in taste neurons. Gr5a neurons selectively respond to sugars, in contrast to Gr66a cells which respond to bitter compounds. Flies are attracted to sugars and avoid bitter substances, suggesting that Gr5a neuron activity is sufficient to mediate acceptance behavior. Sugar signal transduction occurs through coupling with G-proteins such as Galpha49B and G-salpha60A. In Drosophila melanogaster (Fruit fly), this protein is Gustatory receptor 5a for trehalose (Gr5a).